A 379-amino-acid polypeptide reads, in one-letter code: Cytochrome b (379 aa).

A run of 4 helical transmembrane segments spans residues 33–53 (FGSL…FLAM), 77–98 (WMIR…FIHI), 113–133 (WNIG…GYVL), and 178–198 (FFAF…VHLL). His-83 and His-97 together coordinate heme b. Residues His-182 and His-196 each coordinate heme b. His-201 provides a ligand contact to a ubiquinone. 4 helical membrane passes run 226 to 246 (MKDI…VLFY), 288 to 308 (LGGV…PMMH), 320 to 340 (LSQC…WIGG), and 347 to 367 (FIMI…IIMP).

This sequence belongs to the cytochrome b family. In terms of assembly, the cytochrome bc1 complex contains 11 subunits: 3 respiratory subunits (MT-CYB, CYC1 and UQCRFS1), 2 core proteins (UQCRC1 and UQCRC2) and 6 low-molecular weight proteins (UQCRH/QCR6, UQCRB/QCR7, UQCRQ/QCR8, UQCR10/QCR9, UQCR11/QCR10 and a cleavage product of UQCRFS1). This cytochrome bc1 complex then forms a dimer. It depends on heme b as a cofactor.

The protein resides in the mitochondrion inner membrane. Component of the ubiquinol-cytochrome c reductase complex (complex III or cytochrome b-c1 complex) that is part of the mitochondrial respiratory chain. The b-c1 complex mediates electron transfer from ubiquinol to cytochrome c. Contributes to the generation of a proton gradient across the mitochondrial membrane that is then used for ATP synthesis. The sequence is that of Cytochrome b (MT-CYB) from Massoutiera mzabi (Mzab gundi).